We begin with the raw amino-acid sequence, 360 residues long: Lipid-A-disaccharide synthase (360 aa).

The protein belongs to the LpxB family.

The enzyme catalyses a lipid X + a UDP-2-N,3-O-bis[(3R)-3-hydroxyacyl]-alpha-D-glucosamine = a lipid A disaccharide + UDP + H(+). Its pathway is bacterial outer membrane biogenesis; LPS lipid A biosynthesis. Its function is as follows. Condensation of UDP-2,3-diacylglucosamine and 2,3-diacylglucosamine-1-phosphate to form lipid A disaccharide, a precursor of lipid A, a phosphorylated glycolipid that anchors the lipopolysaccharide to the outer membrane of the cell. The chain is Lipid-A-disaccharide synthase from Helicobacter pylori (strain G27).